A 201-amino-acid polypeptide reads, in one-letter code: FMN-dependent NADH:quinone oxidoreductase (201 aa).

FMN is bound by residues Ser-10, Ser-16–Ser-18, Met-96–Phe-99, and Ser-140–Gly-143.

It belongs to the azoreductase type 1 family. In terms of assembly, homodimer. Requires FMN as cofactor.

The enzyme catalyses 2 a quinone + NADH + H(+) = 2 a 1,4-benzosemiquinone + NAD(+). It carries out the reaction N,N-dimethyl-1,4-phenylenediamine + anthranilate + 2 NAD(+) = 2-(4-dimethylaminophenyl)diazenylbenzoate + 2 NADH + 2 H(+). Quinone reductase that provides resistance to thiol-specific stress caused by electrophilic quinones. Its function is as follows. Also exhibits azoreductase activity. Catalyzes the reductive cleavage of the azo bond in aromatic azo compounds to the corresponding amines. The sequence is that of FMN-dependent NADH:quinone oxidoreductase from Cronobacter sakazakii (strain ATCC BAA-894) (Enterobacter sakazakii).